The primary structure comprises 234 residues: MIDLWPAIDLINSTSVRLTEGKYDTKEKMEKSVEDSIRFYSQFKCVKRIHIVDLIGAKAKEVKEFDYIRSLRKVTTKPIEVGGGIRSKQTIENYIHSGIDYCIVGTKGIQDIEWLTHMTHQFPNKLYLSVDAFGEKIKINGWKEDAKLNLFDYVAKIEHLPLGGVIYTDISKDGKLSGPNFDLTGRLALYTSLPVIASGGIRHQEDLFRLESLNVHAAIVGKAAHLDEFWEGLS.

D9 serves as the catalytic Proton acceptor. D131 serves as the catalytic Proton donor.

This sequence belongs to the HisA/HisF family.

It is found in the cytoplasm. The catalysed reaction is 1-(5-phospho-beta-D-ribosyl)-5-[(5-phospho-beta-D-ribosylamino)methylideneamino]imidazole-4-carboxamide = 5-[(5-phospho-1-deoxy-D-ribulos-1-ylimino)methylamino]-1-(5-phospho-beta-D-ribosyl)imidazole-4-carboxamide. Its pathway is amino-acid biosynthesis; L-histidine biosynthesis; L-histidine from 5-phospho-alpha-D-ribose 1-diphosphate: step 4/9. This chain is 1-(5-phosphoribosyl)-5-[(5-phosphoribosylamino)methylideneamino] imidazole-4-carboxamide isomerase, found in Staphylococcus epidermidis (strain ATCC 12228 / FDA PCI 1200).